The chain runs to 125 residues: UPF0231 protein APL_0968 (125 aa).

The protein belongs to the UPF0231 family.

The sequence is that of UPF0231 protein APL_0968 from Actinobacillus pleuropneumoniae serotype 5b (strain L20).